The following is a 373-amino-acid chain: tRNA N6-adenosine threonylcarbamoyltransferase (373 aa).

His133, His137, and Tyr154 together coordinate a divalent metal cation. Substrate-binding positions include 154-158 (YVSGG), Asp186, Gly201, Glu205, and Asn302. Asp331 serves as a coordination point for a divalent metal cation.

This sequence belongs to the KAE1 / TsaD family. Component of the EKC/KEOPS complex composed of at least BUD32, CGI121, GON7, KAE1 and PCC1; the whole complex dimerizes. The cofactor is a divalent metal cation.

It is found in the cytoplasm. The protein localises to the nucleus. The enzyme catalyses L-threonylcarbamoyladenylate + adenosine(37) in tRNA = N(6)-L-threonylcarbamoyladenosine(37) in tRNA + AMP + H(+). Its function is as follows. Component of the EKC/KEOPS complex that is required for the formation of a threonylcarbamoyl group on adenosine at position 37 (t(6)A37) in tRNAs that read codons beginning with adenine. The complex is probably involved in the transfer of the threonylcarbamoyl moiety of threonylcarbamoyl-AMP (TC-AMP) to the N6 group of A37. KAE1 likely plays a direct catalytic role in this reaction, but requires other protein(s) of the complex to fulfill this activity. The EKC/KEOPS complex also promotes both telomere uncapping and telomere elongation. The complex is required for efficient recruitment of transcriptional coactivators. In Debaryomyces hansenii (strain ATCC 36239 / CBS 767 / BCRC 21394 / JCM 1990 / NBRC 0083 / IGC 2968) (Yeast), this protein is tRNA N6-adenosine threonylcarbamoyltransferase.